The chain runs to 134 residues: Ribonuclease VapC40 (134 aa).

Residues 3 to 126 (APDTSVLVAG…LRAVETYERL (124 aa)) enclose the PINc domain. Positions 5 and 98 each coordinate Mg(2+).

It belongs to the PINc/VapC protein family. The cofactor is Mg(2+).

Functionally, toxic component of a type II toxin-antitoxin (TA) system. An RNase. Its cognate antitoxin is VapB40. The polypeptide is Ribonuclease VapC40 (Mycobacterium tuberculosis (strain CDC 1551 / Oshkosh)).